The primary structure comprises 641 residues: Threonine--tRNA ligase (641 aa).

Residues 1 to 61 enclose the TGS domain; sequence MIKINLLNHQ…TQDGDLEILA (61 aa). Residues 240-538 form a catalytic region; sequence DHKRLNKKLD…LIEENKGVFP (299 aa). The Zn(2+) site is built by C334, H385, and H515.

It belongs to the class-II aminoacyl-tRNA synthetase family. Homodimer. The cofactor is Zn(2+).

Its subcellular location is the cytoplasm. It carries out the reaction tRNA(Thr) + L-threonine + ATP = L-threonyl-tRNA(Thr) + AMP + diphosphate + H(+). Catalyzes the attachment of threonine to tRNA(Thr) in a two-step reaction: L-threonine is first activated by ATP to form Thr-AMP and then transferred to the acceptor end of tRNA(Thr). Also edits incorrectly charged L-seryl-tRNA(Thr). This chain is Threonine--tRNA ligase, found in Phytoplasma australiense.